The following is a 143-amino-acid chain: Transcriptional regulator MraZ (143 aa).

2 consecutive SpoVT-AbrB domains span residues 5–47 (TYTP…PREE) and 76–119 (TDEQ…DAQA).

This sequence belongs to the MraZ family. In terms of assembly, forms oligomers.

It is found in the cytoplasm. It localises to the nucleoid. This Rhodococcus jostii (strain RHA1) protein is Transcriptional regulator MraZ.